Consider the following 530-residue polypeptide: MATPDVSVHMEEVVVVTTPDTAVDGSGVEEVKTVLVTTNLAPHGGDLTEDNMETENAAAAAAAAFTASSQLKEAVLVKMAEEGENLEAEIVYPITCGDSRANLIWRKFVCPGINVKCVQYDEHVISPKEFVHLAGKSTLKDWKRAIRMNGIMLRKIMDSGELDFYQHDKVCSNTCRSTKIDLSGARVSLSSPTSTEYIPLTPAAADVNGSPATITIETCEDPGDWTTTIGDDTFAFWRGLKDAGLLDEVIQEFQQELEETMKGLQQRVQDPPLQLRDAVLLNNIVQNFGMLDLVKKVLASHKCQMDRSREQYARDLAALEQQCDEHRRRAKELKHKSQHLSNVLMTLTPVPLPSPMKRPRLARATSGPAAMASQVLTQSAQIALSPGMPVSQLTSVPLGKVVSTLPSTVLGKGSPQAAPASSPASPLLGGYTVLASSGSTFPNAVEIHPDTSSLTVLSTAAMQDGSTVLKVVSPLQLLTLPGLGPTLQNVAQASPAGSTIVTMPTATATGPEEHTATIEVAAVAEDHEQK.

An SAND domain is found at 81 to 163 (EEGENLEAEI…RKIMDSGELD (83 aa)). Cysteine 110 contributes to the Zn(2+) binding site. The DNA site is built by lysine 136, lysine 140, lysine 143, and arginine 154. Lysine 155 is covalently cross-linked (Glycyl lysine isopeptide (Lys-Gly) (interchain with G-Cter in SUMO1); alternate). A Glycyl lysine isopeptide (Lys-Gly) (interchain with G-Cter in SUMO2); alternate cross-link involves residue lysine 155. Residues histidine 167, cysteine 171, and cysteine 175 each contribute to the Zn(2+) site. Coiled coils occupy residues 245–270 (LLDE…RVQD) and 304–344 (QMDR…SNVL). At serine 373 the chain carries Phosphoserine.

As to quaternary structure, homodimer, and heterodimer of GMEB1 and GMEB2. Interacts with the glucocorticoid receptor (NR3C1). May interact with CREB-binding protein (CBP).

It is found in the nucleus. It localises to the cytoplasm. Trans-acting factor that binds to glucocorticoid modulatory elements (GME) present in the TAT (tyrosine aminotransferase) promoter and increases sensitivity to low concentrations of glucocorticoids. Also binds to the transferrin receptor promoter. In Mus musculus (Mouse), this protein is Glucocorticoid modulatory element-binding protein 2 (Gmeb2).